The primary structure comprises 424 residues: MDLHELERLRAENEQLKAELASKQHQIKQNDIKSYKGLSFEEHRRYGRQMIVSEFGSLTSQLKLKQCKTLVVGAGGLGCPSLMYLVGAGVGTIGIVDDDLVDETNLHRQVLHSTTSVGRLKCESAKSYLQELNPNVNIITYPVRLSNKNAFEIFADFDLVLDCTDSPASRYLINDVAVYFNIPVVSGSGLRTEGQLSVFNYENGPCYRCFYPDPPAANSVTSCSEGGVLGPVIGLLGTAMAVEAIKVITGFYHNTFKPFLTMYSAYPQQTFRVFKMRGKQKTCLCNHITRQAIESIDYSEFCGTLGPVNLLSHDQRISVHDYNSVRNSDHVLLDVRPKEQFEVSSFPGAVNIPWDSVLSKTTNIDKIDQLQLPPKSPIYVVCRYGNDSQLATKKLLDMGWNNVKDIKGGVSRWYSEVDQNIPFY.

Residues Gly76, Asp97, 104–108 (TNLHR), Lys121, and 165–166 (DS) each bind ATP. The Zn(2+) site is built by Cys206 and Cys209. Cys223 serves as the catalytic Glycyl thioester intermediate; for adenylyltransferase activity. Residue Cys283 participates in Zn(2+) binding. One can recognise a Rhodanese domain in the interval 326–422 (RNSDHVLLDV…WYSEVDQNIP (97 aa)). Cys382 (cysteine persulfide intermediate; for sulfurtransferase activity) is an active-site residue.

In the N-terminal section; belongs to the HesA/MoeB/ThiF family. UBA4 subfamily. It depends on Zn(2+) as a cofactor.

It localises to the cytoplasm. The protein localises to the cytosol. It participates in tRNA modification; 5-methoxycarbonylmethyl-2-thiouridine-tRNA biosynthesis. In terms of biological role, plays a central role in 2-thiolation of mcm(5)S(2)U at tRNA wobble positions of cytosolic tRNA(Lys), tRNA(Glu) and tRNA(Gln). Acts by mediating the C-terminal thiocarboxylation of sulfur carrier URM1. Its N-terminus first activates URM1 as acyl-adenylate (-COAMP), then the persulfide sulfur on the catalytic cysteine is transferred to URM1 to form thiocarboxylation (-COSH) of its C-terminus. The reaction probably involves hydrogen sulfide that is generated from the persulfide intermediate and that acts as a nucleophile towards URM1. Subsequently, a transient disulfide bond is formed. Does not use thiosulfate as sulfur donor; NFS1 probably acting as a sulfur donor for thiocarboxylation reactions. Prior mcm(5) tRNA modification by the elongator complex is required for 2-thiolation. May also be involved in protein urmylation. The polypeptide is Adenylyltransferase and sulfurtransferase UBA4 (Meyerozyma guilliermondii (strain ATCC 6260 / CBS 566 / DSM 6381 / JCM 1539 / NBRC 10279 / NRRL Y-324) (Yeast)).